The sequence spans 956 residues: RNA-binding protein 44 (956 aa).

The interval 301–321 is disordered; it reads DNTQNNQNQSYNPTEENDHNV. The RRM domain occupies 750–824; it reads SLLCITCLPG…HAVQVVHLSG (75 aa). The disordered stretch occupies residues 831-855; sequence KPSDLSHSASESHKEDTAGDELRTK. A compositionally biased stretch (basic and acidic residues) spans 840–854; it reads SESHKEDTAGDELRT.

It localises to the cytoplasm. In terms of biological role, component of intercellular bridges during meiosis. Intercellular bridges are evolutionarily conserved structures that connect differentiating germ cells. Not required for fertility. The polypeptide is RNA-binding protein 44 (rbm44) (Danio rerio (Zebrafish)).